The sequence spans 344 residues: MHGILRVKLSEEQRKLKAEKERAKIEEYRGLVSRFQEARKRKDYSEGNLKLTTELLDWNPETYSVWNYRREILLNDVFPKISLNEKQDLLDNELKYVLSKMKVFPKVYWIFNHRRWCLENAPYPNWNYEMMITEKLLSADARNFHGWHYRRYVVSQIERAGNCSLAKKEMEYTTSAIATNFSNFSALHNRTKLIETILNLEADPNSQKALAKQILEQELDMIHQAVFTDPDDSSVWIYHRWLMGHCNPNSMTPLISMITIEERIQYLQKEIELIQELHEMEPENRWCCESLVNYEALCKTLEKQKPTEADIKRWTLLVDKMIKVDPQRRGRYRTLQEKINNLNK.

PFTA repeat units follow at residues tyrosine 44 to phenylalanine 78, leucine 89 to tyrosine 123, asparagine 125 to arginine 159, leucine 165 to asparagine 199, isoleucine 214 to proline 248, and tyrosine 266 to asparagine 293.

Belongs to the protein prenyltransferase subunit alpha family. Heterodimer of an alpha and a beta subunit.

The catalysed reaction is geranylgeranyl diphosphate + L-cysteinyl-[protein] = S-geranylgeranyl-L-cysteinyl-[protein] + diphosphate. Catalyzes the transfer of a geranyl-geranyl moiety from geranyl-geranyl pyrophosphate to proteins having the C-terminal-XCC or -XCXC, where both cysteines may become modified. This Schizosaccharomyces pombe (strain 972 / ATCC 24843) (Fission yeast) protein is Geranylgeranyl transferase type-2 subunit alpha (bet4).